We begin with the raw amino-acid sequence, 151 residues long: uncharacterized protein (151 aa).

The protein to equivalent protein in phage 82.

This is an uncharacterized protein from Escherichia coli (strain K12).